We begin with the raw amino-acid sequence, 127 residues long: UPF0102 protein Gura_3756 (127 aa).

Belongs to the UPF0102 family.

This chain is UPF0102 protein Gura_3756, found in Geotalea uraniireducens (strain Rf4) (Geobacter uraniireducens).